Reading from the N-terminus, the 215-residue chain is Ribose-5-phosphate isomerase A (215 aa).

Residues 26–29 (TGST), 79–82 (DGAD), and 92–95 (KGGG) contribute to the substrate site. The active-site Proton acceptor is the glutamate 101. Lysine 119 serves as a coordination point for substrate.

Belongs to the ribose 5-phosphate isomerase family. Homodimer.

It carries out the reaction aldehydo-D-ribose 5-phosphate = D-ribulose 5-phosphate. It functions in the pathway carbohydrate degradation; pentose phosphate pathway; D-ribose 5-phosphate from D-ribulose 5-phosphate (non-oxidative stage): step 1/1. Its function is as follows. Catalyzes the reversible conversion of ribose-5-phosphate to ribulose 5-phosphate. In Xylella fastidiosa (strain Temecula1 / ATCC 700964), this protein is Ribose-5-phosphate isomerase A.